The sequence spans 915 residues: Bifunctional uridylyltransferase/uridylyl-removing enzyme (915 aa).

Residues Met1–Pro360 form a uridylyltransferase region. The interval Ile361 to Val731 is uridylyl-removing. The region spanning Val478–Val594 is the HD domain. ACT domains follow at residues Gln732 to Arg817 and Ile840 to Ile915.

It belongs to the GlnD family. Requires Mg(2+) as cofactor.

The enzyme catalyses [protein-PII]-L-tyrosine + UTP = [protein-PII]-uridylyl-L-tyrosine + diphosphate. It carries out the reaction [protein-PII]-uridylyl-L-tyrosine + H2O = [protein-PII]-L-tyrosine + UMP + H(+). Its activity is regulated as follows. Uridylyltransferase (UTase) activity is inhibited by glutamine, while glutamine activates uridylyl-removing (UR) activity. Modifies, by uridylylation and deuridylylation, the PII regulatory proteins (GlnB and homologs), in response to the nitrogen status of the cell that GlnD senses through the glutamine level. Under low glutamine levels, catalyzes the conversion of the PII proteins and UTP to PII-UMP and PPi, while under higher glutamine levels, GlnD hydrolyzes PII-UMP to PII and UMP (deuridylylation). Thus, controls uridylylation state and activity of the PII proteins, and plays an important role in the regulation of nitrogen assimilation and metabolism. The polypeptide is Bifunctional uridylyltransferase/uridylyl-removing enzyme (Psychrobacter arcticus (strain DSM 17307 / VKM B-2377 / 273-4)).